A 149-amino-acid polypeptide reads, in one-letter code: Stathmin (149 aa).

Ala-2 is modified (N-acetylalanine). A Phosphoserine modification is found at Ser-4. Residues 4–145 (SDIQVKELEK…NKESKDPADE (142 aa)) enclose the SLD domain. Lys-9 bears the N6-acetyllysine mark. At Ser-16 the chain carries Phosphoserine. A Phosphoserine; by CDK1, MAPK1 and MAPK3 modification is found at Ser-25. Lys-29 carries the N6-methyllysine modification. A Phosphoserine modification is found at Ser-31. Ser-38 carries the phosphoserine; by CDK1, MAPK1 and MAPK3 modification. Residues 41-140 (KKKDLSLEEI…EEVRKNKESK (100 aa)) are a coiled coil. Phosphoserine; by PKA is present on Ser-63. N6-acetyllysine occurs at positions 100 and 119. Over residues 121-143 (ERLREKDKHIEEVRKNKESKDPA) the composition is skewed to basic and acidic residues. A disordered region spans residues 121–149 (ERLREKDKHIEEVRKNKESKDPADETEAD).

This sequence belongs to the stathmin family. Binds to two alpha/beta-tubulin heterodimers. Interacts with KIST. In terms of processing, many different phosphorylated forms are observed depending on specific combinations among the sites which can be phosphorylated. MAPK is responsible for the phosphorylation of stathmin in response to NGF. Phosphorylation at Ser-16 seems to be required for neuron polarization.

The protein resides in the cytoplasm. Its subcellular location is the cytoskeleton. Functionally, involved in the regulation of the microtubule (MT) filament system by destabilizing microtubules. Prevents assembly and promotes disassembly of microtubules. Its phosphorylation at Ser-16 may be required for axon formation during neurogenesis. Involved in the control of the learned and innate fear. The protein is Stathmin (STMN1) of Bos taurus (Bovine).